We begin with the raw amino-acid sequence, 348 residues long: LRP2-binding protein (348 aa).

A TPR repeat occupies 60-93 (TLAYFLRGQLYFEEGWYEEALEQFEEIEEKDHQA). 6 Sel1-like repeats span residues 94–126 (TYQL…DSPC), 134–169 (FAAA…DNGN), 174–207 (VKAQ…GNGN), 208–243 (LESQ…ERGN), 244–278 (VYAQ…EVHD), and 298–333 (AMAS…RLNP).

In terms of assembly, interacts with LRP2.

Its subcellular location is the cytoplasm. May act as an adapter that regulates LRP2 function. The chain is LRP2-binding protein (LRP2BP) from Macaca fascicularis (Crab-eating macaque).